Reading from the N-terminus, the 377-residue chain is Bifunctional enzyme IspD/IspF (377 aa).

A 2-C-methyl-D-erythritol 4-phosphate cytidylyltransferase region spans residues 1 to 221 (MTTAAIIVAA…ERILRQDMDV (221 aa)). Residues 222–377 (RLGNGYDVHR…ALATACLVKP (156 aa)) are 2-C-methyl-D-erythritol 2,4-cyclodiphosphate synthase. Positions 228 and 230 each coordinate a divalent metal cation. 4-CDP-2-C-methyl-D-erythritol 2-phosphate is bound by residues 228–230 (DVH) and 254–255 (HS). His262 lines the a divalent metal cation pocket. 4-CDP-2-C-methyl-D-erythritol 2-phosphate-binding positions include 276-278 (DIG), 352-355 (TTSE), Phe359, and Arg362.

The protein in the N-terminal section; belongs to the IspD/TarI cytidylyltransferase family. IspD subfamily. In the C-terminal section; belongs to the IspF family. A divalent metal cation serves as cofactor.

It carries out the reaction 2-C-methyl-D-erythritol 4-phosphate + CTP + H(+) = 4-CDP-2-C-methyl-D-erythritol + diphosphate. The catalysed reaction is 4-CDP-2-C-methyl-D-erythritol 2-phosphate = 2-C-methyl-D-erythritol 2,4-cyclic diphosphate + CMP. It functions in the pathway isoprenoid biosynthesis; isopentenyl diphosphate biosynthesis via DXP pathway; isopentenyl diphosphate from 1-deoxy-D-xylulose 5-phosphate: step 2/6. Its pathway is isoprenoid biosynthesis; isopentenyl diphosphate biosynthesis via DXP pathway; isopentenyl diphosphate from 1-deoxy-D-xylulose 5-phosphate: step 4/6. Bifunctional enzyme that catalyzes the formation of 4-diphosphocytidyl-2-C-methyl-D-erythritol from CTP and 2-C-methyl-D-erythritol 4-phosphate (MEP) (IspD), and catalyzes the conversion of 4-diphosphocytidyl-2-C-methyl-D-erythritol 2-phosphate (CDP-ME2P) to 2-C-methyl-D-erythritol 2,4-cyclodiphosphate (ME-CPP) with a corresponding release of cytidine 5-monophosphate (CMP) (IspF). The chain is Bifunctional enzyme IspD/IspF from Ruegeria pomeroyi (strain ATCC 700808 / DSM 15171 / DSS-3) (Silicibacter pomeroyi).